The chain runs to 154 residues: Actin-related protein 2/3 complex subunit 5 (154 aa).

The residue at position 142 (threonine 142) is a Phosphothreonine.

It belongs to the ARPC5 family. Component of the Arp2/3 complex composed of ARP2, ARP3, ARC40/p41-ARC, ARC35/p34-ARC, ARC18/p21-ARC, ARC19/p20-ARC and ARC16/p16-ARC.

Its subcellular location is the cytoplasm. The protein resides in the cytoskeleton. It localises to the actin patch. Functions as a component of the Arp2/3 complex which is involved in regulation of actin polymerization and together with an activating nucleation-promoting factor (NPF) mediates the formation of branched actin networks. The polypeptide is Actin-related protein 2/3 complex subunit 5 (ARC15) (Saccharomyces cerevisiae (strain ATCC 204508 / S288c) (Baker's yeast)).